The primary structure comprises 150 residues: Ribosome maturation factor RimP (150 aa).

This sequence belongs to the RimP family.

The protein localises to the cytoplasm. Functionally, required for maturation of 30S ribosomal subunits. This Francisella tularensis subsp. mediasiatica (strain FSC147) protein is Ribosome maturation factor RimP.